The chain runs to 135 residues: Large ribosomal subunit protein uL16c (135 aa).

The protein belongs to the universal ribosomal protein uL16 family. In terms of assembly, part of the 50S ribosomal subunit.

The protein resides in the plastid. It is found in the chloroplast. This is Large ribosomal subunit protein uL16c from Eucalyptus globulus subsp. globulus (Tasmanian blue gum).